A 230-amino-acid polypeptide reads, in one-letter code: Large ribosomal subunit protein uL1 (230 aa).

The protein belongs to the universal ribosomal protein uL1 family. As to quaternary structure, part of the 50S ribosomal subunit.

Functionally, binds directly to 23S rRNA. The L1 stalk is quite mobile in the ribosome, and is involved in E site tRNA release. Its function is as follows. Protein L1 is also a translational repressor protein, it controls the translation of the L11 operon by binding to its mRNA. This chain is Large ribosomal subunit protein uL1, found in Chromohalobacter salexigens (strain ATCC BAA-138 / DSM 3043 / CIP 106854 / NCIMB 13768 / 1H11).